The sequence spans 510 residues: 2,3-bisphosphoglycerate-independent phosphoglycerate mutase (510 aa).

Mn(2+)-binding residues include aspartate 12 and serine 62. Serine 62 serves as the catalytic Phosphoserine intermediate. Substrate-binding positions include histidine 123, 153-154 (RD), arginine 185, arginine 191, 260-263 (RPDR), and lysine 335. Mn(2+) contacts are provided by aspartate 402, histidine 406, aspartate 443, histidine 444, and histidine 461.

This sequence belongs to the BPG-independent phosphoglycerate mutase family. As to quaternary structure, monomer. Mn(2+) serves as cofactor.

It carries out the reaction (2R)-2-phosphoglycerate = (2R)-3-phosphoglycerate. It participates in carbohydrate degradation; glycolysis; pyruvate from D-glyceraldehyde 3-phosphate: step 3/5. Its function is as follows. Catalyzes the interconversion of 2-phosphoglycerate and 3-phosphoglycerate. The sequence is that of 2,3-bisphosphoglycerate-independent phosphoglycerate mutase from Listeria monocytogenes serotype 4b (strain F2365).